The sequence spans 196 residues: Glycerol-3-phosphate acyltransferase (196 aa).

5 helical membrane-spanning segments follow: residues 1–21 (MGFIIGFLLSVFGYLLGSILF), 53–73 (KYGALVFLLDAFKGFLIAILD), 76–96 (YIDPSSLWFGIVMVSPVIGHI), 115–135 (VVFGISPLLALKMFLVWAFVF), and 141–161 (VSLASITSVLVGYFLFLEGDF).

This sequence belongs to the PlsY family. In terms of assembly, probably interacts with PlsX.

It localises to the cell inner membrane. It carries out the reaction an acyl phosphate + sn-glycerol 3-phosphate = a 1-acyl-sn-glycero-3-phosphate + phosphate. It functions in the pathway lipid metabolism; phospholipid metabolism. In terms of biological role, catalyzes the transfer of an acyl group from acyl-phosphate (acyl-PO(4)) to glycerol-3-phosphate (G3P) to form lysophosphatidic acid (LPA). This enzyme utilizes acyl-phosphate as fatty acyl donor, but not acyl-CoA or acyl-ACP. In Hydrogenobaculum sp. (strain Y04AAS1), this protein is Glycerol-3-phosphate acyltransferase.